A 651-amino-acid polypeptide reads, in one-letter code: Zinc metalloproteinase nas-32 (651 aa).

The N-terminal stretch at 1–21 (MRRFFICYIGFLSIFLDFILA) is a signal peptide. Residues 22–202 (DKDNNSEEER…EQSSKSRRKK (181 aa)) constitute a propeptide that is removed on maturation. Residues N25, N72, and N251 are each glycosylated (N-linked (GlcNAc...) asparagine). In terms of domain architecture, Peptidase M12A spans 203–394 (RQIDNLAQFW…KMLNTHYSCS (192 aa)). Intrachain disulfides connect C245–C393, C264–C283, C395–C412, C415–C426, C434–C467, and C495–C516. H291 contacts Zn(2+). E292 is a catalytic residue. H295 and H301 together coordinate Zn(2+). The EGF-like domain maps to 380–433 (TFLDLKMLNTHYSCSCPTILSCGNGGFTNPANCSVCICPYGFGGALCTERTDYG). Residue N411 is glycosylated (N-linked (GlcNAc...) asparagine). One can recognise a CUB domain in the interval 434 to 554 (CGSTLTATDT…TTYTWSYRYV (121 aa)). N453 is a glycosylation site (N-linked (GlcNAc...) asparagine). An N-linked (GlcNAc...) asparagine glycan is attached at N557. 3 cysteine pairs are disulfide-bonded: C610–C647, C619–C640, and C628–C644. Residues 610 to 647 (CKDRFPKSQCSTYSTNGMCTQQPPLAAEFSCAETCGFC) enclose the ShKT domain.

The cofactor is Zn(2+). As to expression, expressed in pharyngeal, anal depressor, intestinal and vulva muscles, head neurons and head mesodermal cell.

The protein resides in the secreted. Functionally, metalloprotease. This Caenorhabditis elegans protein is Zinc metalloproteinase nas-32 (nas-32).